The chain runs to 78 residues: Large ribosomal subunit protein bL28 (78 aa).

A disordered region spans residues 1–21; sequence MARVCQVTGKGPMTGNNVSHA.

Belongs to the bacterial ribosomal protein bL28 family.

In Bordetella petrii (strain ATCC BAA-461 / DSM 12804 / CCUG 43448), this protein is Large ribosomal subunit protein bL28.